The primary structure comprises 181 residues: Large ribosomal subunit protein uL5c (181 aa).

This sequence belongs to the universal ribosomal protein uL5 family. As to quaternary structure, part of the 50S ribosomal subunit; contacts the 5S rRNA.

The protein resides in the plastid. Its function is as follows. Binds 5S rRNA, forms part of the central protuberance of the 50S subunit. This is Large ribosomal subunit protein uL5c (rpl5) from Helicosporidium sp. subsp. Simulium jonesii (Green alga).